A 147-amino-acid chain; its full sequence is Nucleoside diphosphate kinase (147 aa).

The ATP site is built by lysine 9, phenylalanine 57, arginine 85, threonine 91, arginine 102, and asparagine 112. Histidine 115 acts as the Pros-phosphohistidine intermediate in catalysis.

This sequence belongs to the NDK family. In terms of assembly, homotetramer. Mg(2+) serves as cofactor.

The protein resides in the cytoplasm. It carries out the reaction a 2'-deoxyribonucleoside 5'-diphosphate + ATP = a 2'-deoxyribonucleoside 5'-triphosphate + ADP. The catalysed reaction is a ribonucleoside 5'-diphosphate + ATP = a ribonucleoside 5'-triphosphate + ADP. Functionally, major role in the synthesis of nucleoside triphosphates other than ATP. The ATP gamma phosphate is transferred to the NDP beta phosphate via a ping-pong mechanism, using a phosphorylated active-site intermediate. The protein is Nucleoside diphosphate kinase of Thermosipho melanesiensis (strain DSM 12029 / CIP 104789 / BI429).